Reading from the N-terminus, the 572-residue chain is O-fucosyltransferase 16 (572 aa).

A helical; Signal-anchor for type II membrane protein transmembrane segment spans residues 17 to 37 (LLPLVIAVSLSLLILFAFLSF). N92 and N136 each carry an N-linked (GlcNAc...) asparagine glycan. 274–276 (HLR) provides a ligand contact to substrate. N446 and N506 each carry an N-linked (GlcNAc...) asparagine glycan. Positions 498 to 572 (ESRKLGKKNK…EPELEAMLSD (75 aa)) are disordered. Positions 521 to 541 (DQTEEDDPDWSEPDYEEEQSD) are enriched in acidic residues. N549 carries N-linked (GlcNAc...) asparagine glycosylation. Over residues 554–566 (DYDDPSTSDEPEL) the composition is skewed to acidic residues.

This sequence belongs to the glycosyltransferase GT106 family.

It localises to the membrane. It participates in glycan metabolism. The sequence is that of O-fucosyltransferase 16 from Arabidopsis thaliana (Mouse-ear cress).